Here is a 205-residue protein sequence, read N- to C-terminus: Holliday junction branch migration complex subunit RuvA (205 aa).

The tract at residues 1–64 (MIGKLKGVID…EDQIKLFGFR (64 aa)) is domain I. The interval 65 to 143 (SDIEREWFRL…AFANVDPAVV (79 aa)) is domain II. The tract at residues 144–154 (HLAGAVDDDRA) is flexible linker. Residues 154–205 (APRPVKDAISALVNLGYGQPQAAAAIASVARDAGEGAETAQLIRLGLKELAK) are domain III.

This sequence belongs to the RuvA family. In terms of assembly, homotetramer. Forms an RuvA(8)-RuvB(12)-Holliday junction (HJ) complex. HJ DNA is sandwiched between 2 RuvA tetramers; dsDNA enters through RuvA and exits via RuvB. An RuvB hexamer assembles on each DNA strand where it exits the tetramer. Each RuvB hexamer is contacted by two RuvA subunits (via domain III) on 2 adjacent RuvB subunits; this complex drives branch migration. In the full resolvosome a probable DNA-RuvA(4)-RuvB(12)-RuvC(2) complex forms which resolves the HJ.

Its subcellular location is the cytoplasm. Its function is as follows. The RuvA-RuvB-RuvC complex processes Holliday junction (HJ) DNA during genetic recombination and DNA repair, while the RuvA-RuvB complex plays an important role in the rescue of blocked DNA replication forks via replication fork reversal (RFR). RuvA specifically binds to HJ cruciform DNA, conferring on it an open structure. The RuvB hexamer acts as an ATP-dependent pump, pulling dsDNA into and through the RuvAB complex. HJ branch migration allows RuvC to scan DNA until it finds its consensus sequence, where it cleaves and resolves the cruciform DNA. This is Holliday junction branch migration complex subunit RuvA from Afipia carboxidovorans (strain ATCC 49405 / DSM 1227 / KCTC 32145 / OM5) (Oligotropha carboxidovorans).